The following is a 103-amino-acid chain: Cell division suppressor protein YneA (103 aa).

The LysM domain maps to 36–87 (VKIKVQDGDTLWSLADHVAEKKHINKEDFIEWVTENNHLQTADIKPGDELIL).

Belongs to the YneA family.

It localises to the cytoplasm. Inhibits cell division during the SOS response. Affects a later stage of the cell division protein assembly, after the assembly of the Z ring, by probably suppressing recruitment of FtsL and/or DivIC to the division machinery. In Bacillus velezensis (strain DSM 23117 / BGSC 10A6 / LMG 26770 / FZB42) (Bacillus amyloliquefaciens subsp. plantarum), this protein is Cell division suppressor protein YneA.